Here is a 233-residue protein sequence, read N- to C-terminus: 2-C-methyl-D-erythritol 4-phosphate cytidylyltransferase (233 aa).

Belongs to the IspD/TarI cytidylyltransferase family. IspD subfamily.

The catalysed reaction is 2-C-methyl-D-erythritol 4-phosphate + CTP + H(+) = 4-CDP-2-C-methyl-D-erythritol + diphosphate. It participates in isoprenoid biosynthesis; isopentenyl diphosphate biosynthesis via DXP pathway; isopentenyl diphosphate from 1-deoxy-D-xylulose 5-phosphate: step 2/6. Its function is as follows. Catalyzes the formation of 4-diphosphocytidyl-2-C-methyl-D-erythritol from CTP and 2-C-methyl-D-erythritol 4-phosphate (MEP). The sequence is that of 2-C-methyl-D-erythritol 4-phosphate cytidylyltransferase from Syntrophotalea carbinolica (strain DSM 2380 / NBRC 103641 / GraBd1) (Pelobacter carbinolicus).